Consider the following 416-residue polypeptide: Gamma-glutamyl phosphate reductase (416 aa).

This sequence belongs to the gamma-glutamyl phosphate reductase family.

The protein localises to the cytoplasm. It catalyses the reaction L-glutamate 5-semialdehyde + phosphate + NADP(+) = L-glutamyl 5-phosphate + NADPH + H(+). It participates in amino-acid biosynthesis; L-proline biosynthesis; L-glutamate 5-semialdehyde from L-glutamate: step 2/2. Catalyzes the NADPH-dependent reduction of L-glutamate 5-phosphate into L-glutamate 5-semialdehyde and phosphate. The product spontaneously undergoes cyclization to form 1-pyrroline-5-carboxylate. The protein is Gamma-glutamyl phosphate reductase of Streptococcus mutans serotype c (strain ATCC 700610 / UA159).